Consider the following 94-residue polypeptide: Evasin P1172 (94 aa).

3 disulfides stabilise this stretch: C35–C54, C39–C56, and C50–C67. Residues N38, N44, N53, and N80 are each glycosylated (N-linked (GlcNAc...) asparagine).

It is found in the secreted. In terms of biological role, salivary chemokine-binding protein which binds to host chemokines CXCL1, CXCL2, CXCL5 and CXCL8. The chain is Evasin P1172 from Ixodes ricinus (Common tick).